The following is a 100-amino-acid chain: Urease subunit gamma (100 aa).

Belongs to the urease gamma subunit family. In terms of assembly, heterotrimer of UreA (gamma), UreB (beta) and UreC (alpha) subunits. Three heterotrimers associate to form the active enzyme.

It is found in the cytoplasm. It catalyses the reaction urea + 2 H2O + H(+) = hydrogencarbonate + 2 NH4(+). It participates in nitrogen metabolism; urea degradation; CO(2) and NH(3) from urea (urease route): step 1/1. The chain is Urease subunit gamma from Streptomyces coelicolor (strain ATCC BAA-471 / A3(2) / M145).